The primary structure comprises 58 residues: MLLGDIGGKHIAFFYKRPSVAIITWRPILGFSCCFQLWGEVRLNQTVNRRVTIRMLLL.

This chain is 6.8 kDa protein, found in Satellite tobacco mosaic virus (STMV).